Consider the following 276-residue polypeptide: uncharacterized protein (276 aa).

In terms of domain architecture, AB hydrolase-1 spans 20–137 (PVLIFIPGAN…PPINTFLPDS (118 aa)). Positions 57-76 (GESELTEPLPDSASNPDSDY) are disordered.

Belongs to the AB hydrolase superfamily.

This is an uncharacterized protein from Staphylococcus aureus (strain N315).